Reading from the N-terminus, the 537-residue chain is 5,6-dihydroxyindole-2-carboxylic acid oxidase (537 aa).

Residues 1–24 (MSAPKLLSLGCIFFPLLLFQQARA) form the signal peptide. Over 25–477 (QFPRQCATVE…WPSREFSVPE (453 aa)) the chain is Lumenal, melanosome. Disulfide bonds link C30–C41, C42–C65, C56–C99, C101–C110, and C113–C122. N96 and N104 each carry an N-linked (GlcNAc...) asparagine glycan. N181 is a glycosylation site (N-linked (GlcNAc...) asparagine). The Zn(2+) site is built by H192, H215, and H224. Disulfide bonds link C258–C261 and C290–C303. N-linked (GlcNAc...) asparagine glycans are attached at residues N304 and N350. Residues H377 and H381 each contribute to the Zn(2+) site. Residue N385 is glycosylated (N-linked (GlcNAc...) asparagine). Residue H404 participates in Zn(2+) binding. The helical transmembrane segment at 478–501 (IIAIAVVGALLLVALIFGTASYLI) threads the bilayer. Over 502–537 (RARRSMDEANQPLLTDQYQCYAEEYEKLQNPNQSVV) the chain is Cytoplasmic.

Belongs to the tyrosinase family. Monomer. Interacts with ATP7A. Interacts with SLC45A2. It depends on Cu(2+) as a cofactor. Zn(2+) is required as a cofactor. In terms of processing, glycosylated. As to expression, pigment cells.

The protein resides in the melanosome membrane. The catalysed reaction is 2 5,6-dihydroxyindole-2-carboxylate + O2 = 2 indole-5,6-quinone-2-carboxylate + 2 H2O. It functions in the pathway pigment biosynthesis; melanin biosynthesis. Its activity is regulated as follows. The activity depends critically on the nature of the bound metal ion. Catalyzes the oxidation of 5,6-dihydroxyindole-2-carboxylic acid (DHICA) in the presence of bound Cu(2+) ions, but lacks activity in the presence of bound Zn(2+) ions. Plays a role in melanin biosynthesis. Catalyzes the oxidation of 5,6-dihydroxyindole-2-carboxylic acid (DHICA) into indole-5,6-quinone-2-carboxylic acid in the presence of bound Cu(2+) ions, but not in the presence of Zn(2+). May regulate or influence the type of melanin synthesized. Also to a lower extent, capable of hydroxylating tyrosine and producing melanin. This is 5,6-dihydroxyindole-2-carboxylic acid oxidase from Homo sapiens (Human).